Consider the following 55-residue polypeptide: Ferredoxin-1 (55 aa).

4Fe-4S ferredoxin-type domains follow at residues 2 to 27 (YKIE…EQGD) and 28 to 55 (TIFV…PVAE). [4Fe-4S] cluster-binding residues include cysteine 8, cysteine 11, cysteine 14, cysteine 18, cysteine 37, cysteine 40, cysteine 43, and cysteine 47.

Requires [4Fe-4S] cluster as cofactor.

Its function is as follows. Ferredoxins are iron-sulfur proteins that transfer electrons in a wide variety of metabolic reactions. The protein is Ferredoxin-1 of Rhodospirillum rubrum.